The sequence spans 424 residues: Serine/threonine-protein kinase H1 (424 aa).

Glycine 2 carries N-myristoyl glycine lipidation. Cysteine 3 is lipidated: S-palmitoyl cysteine. Positions 59–79 are disordered; the sequence is APPCPGVPNTGHTAPPSEPPR. Residues 98-355 enclose the Protein kinase domain; the sequence is YDIKALIGRG…ALQALRHPWV (258 aa). ATP contacts are provided by residues 104 to 112 and lysine 127; that span reads IGRGSFSRV. The active-site Proton acceptor is aspartate 218. The segment at 378 to 408 is disordered; it reads RASSRCQSTKSSQSTRSSRSTRSNKSRRVRE. 2 positions are modified to phosphoserine; by autocatalysis: serine 380 and serine 381. Residues 381-398 show a composition bias toward low complexity; sequence SRCQSTKSSQSTRSSRST.

The protein belongs to the protein kinase superfamily. CAMK Ser/Thr protein kinase family. In terms of assembly, homodimer. In terms of processing, autophosphorylated on serine residues. Post-translationally, myristoylated. Required for membrane association. Prerequisite for palmitoylation to occur. Palmitoylated.

The protein localises to the golgi apparatus. Its subcellular location is the cytoplasm. It is found in the cytoskeleton. The protein resides in the microtubule organizing center. It localises to the centrosome. The protein localises to the nucleus speckle. Its subcellular location is the endoplasmic reticulum membrane. It is found in the cell membrane. The enzyme catalyses L-seryl-[protein] + ATP = O-phospho-L-seryl-[protein] + ADP + H(+). It catalyses the reaction L-threonyl-[protein] + ATP = O-phospho-L-threonyl-[protein] + ADP + H(+). With respect to regulation, activity depends on Ca(2+) concentration. Its function is as follows. Serine/threonine protein kinase that may be involved in the regulation of pre-mRNA processing. It may phosphorylate components of nuclear splice factor compartments (SFC), such as non-snRNP splicing factors containing a serine/arginine-rich domain (SR proteins). Reversible phosphorylation of SR proteins may cause their release into the nucleoplasm and change their local concentration, thereby influencing alternative splicing. This chain is Serine/threonine-protein kinase H1 (Pskh1), found in Mus musculus (Mouse).